Reading from the N-terminus, the 231-residue chain is Ribonuclease HII (231 aa).

Residues 32-223 (WPVAGMDEAG…FRLGGTEVVE (192 aa)) form the RNase H type-2 domain. Residues Asp38, Glu39, and Asp130 each contribute to the a divalent metal cation site.

The protein belongs to the RNase HII family. Mn(2+) is required as a cofactor. It depends on Mg(2+) as a cofactor.

Its subcellular location is the cytoplasm. It catalyses the reaction Endonucleolytic cleavage to 5'-phosphomonoester.. In terms of biological role, endonuclease that specifically degrades the RNA of RNA-DNA hybrids. The chain is Ribonuclease HII from Mesorhizobium japonicum (strain LMG 29417 / CECT 9101 / MAFF 303099) (Mesorhizobium loti (strain MAFF 303099)).